Here is a 430-residue protein sequence, read N- to C-terminus: Tol-Pal system protein TolB (430 aa).

Residues 1–21 form the signal peptide; that stretch reads MKQALRVAFGFLMLWAAMLHA.

This sequence belongs to the TolB family. As to quaternary structure, the Tol-Pal system is composed of five core proteins: the inner membrane proteins TolA, TolQ and TolR, the periplasmic protein TolB and the outer membrane protein Pal. They form a network linking the inner and outer membranes and the peptidoglycan layer.

It is found in the periplasm. Part of the Tol-Pal system, which plays a role in outer membrane invagination during cell division and is important for maintaining outer membrane integrity. TolB occupies a key intermediary position in the Tol-Pal system because it communicates directly with both membrane-embedded components, Pal in the outer membrane and TolA in the inner membrane. The sequence is that of Tol-Pal system protein TolB from Escherichia fergusonii (strain ATCC 35469 / DSM 13698 / CCUG 18766 / IAM 14443 / JCM 21226 / LMG 7866 / NBRC 102419 / NCTC 12128 / CDC 0568-73).